Consider the following 300-residue polypeptide: Ribonuclease HIII (300 aa).

One can recognise an RNase H type-2 domain in the interval 86-300 (RPRLGVDESG…FNEICDSASA (215 aa)). A divalent metal cation-binding residues include D92, E93, and D196.

Belongs to the RNase HII family. RnhC subfamily. The cofactor is Mn(2+). It depends on Mg(2+) as a cofactor.

Its subcellular location is the cytoplasm. The enzyme catalyses Endonucleolytic cleavage to 5'-phosphomonoester.. Its function is as follows. Endonuclease that specifically degrades the RNA of RNA-DNA hybrids. The protein is Ribonuclease HIII of Chlamydia felis (strain Fe/C-56) (Chlamydophila felis).